A 412-amino-acid polypeptide reads, in one-letter code: Probable serine/threonine-protein kinase PBL10 (412 aa).

G2 carries N-myristoyl glycine lipidation. A lipid anchor (S-palmitoyl cysteine) is attached at C4. Positions 15–45 (GASPKYMSSEANDSLGSKSSSVSIRTNPRTE) are disordered. Over residues 23 to 43 (SEANDSLGSKSSSVSIRTNPR) the composition is skewed to polar residues. T58 is modified (phosphothreonine). The Protein kinase domain occupies 69–356 (FRPDSVLGEG…VVSHLEHIQT (288 aa)). Residues 75-83 (LGEGGFGSV) and K107 contribute to the ATP site. Y152 is modified (phosphotyrosine). D204 serves as the catalytic Proton acceptor. A phosphoserine mark is found at S208 and S238. T239 and T244 each carry phosphothreonine. A Phosphotyrosine modification is found at Y252.

The protein belongs to the protein kinase superfamily. Ser/Thr protein kinase family. In terms of assembly, interacts with the Xanthomonas campestris effector XopAC/AvrAC. In terms of tissue distribution, expressed in stomatal guard cells of leaves.

It is found in the cell membrane. The catalysed reaction is L-seryl-[protein] + ATP = O-phospho-L-seryl-[protein] + ADP + H(+). The enzyme catalyses L-threonyl-[protein] + ATP = O-phospho-L-threonyl-[protein] + ADP + H(+). Functionally, possible bi-functional kinase. In vitro, it exhibits serine/threonine activity. In vivo, can phosphorylate tyrosine residues of limited substrates. May be involved in plant defense signaling. Required for full light-induced stomatal opening. In Arabidopsis thaliana (Mouse-ear cress), this protein is Probable serine/threonine-protein kinase PBL10.